The following is a 183-amino-acid chain: Adenine phosphoribosyltransferase (183 aa).

This sequence belongs to the purine/pyrimidine phosphoribosyltransferase family. In terms of assembly, homodimer.

The protein localises to the cytoplasm. It carries out the reaction AMP + diphosphate = 5-phospho-alpha-D-ribose 1-diphosphate + adenine. It functions in the pathway purine metabolism; AMP biosynthesis via salvage pathway; AMP from adenine: step 1/1. Functionally, catalyzes a salvage reaction resulting in the formation of AMP, that is energically less costly than de novo synthesis. In Shewanella sp. (strain ANA-3), this protein is Adenine phosphoribosyltransferase.